The chain runs to 385 residues: Serine/threonine-protein kinase SBK1 (385 aa).

A Protein kinase domain is found at 32 to 297 (YEVIRELGKG…VFAHLGHRWM (266 aa)). ATP contacts are provided by residues 38 to 46 (LGKGTYGKV) and K61. The active-site Proton acceptor is the D153. Positions 328–338 (TLSPTANTSNA) are enriched in polar residues. Residues 328–374 (TLSPTANTSNAIEPGSANHFTSMSTNSSVSSTNSYERSARDSPPTSR) are disordered. The span at 348–361 (TSMSTNSSVSSTNS) shows a compositional bias: low complexity.

This sequence belongs to the protein kinase superfamily. Ser/Thr protein kinase family. In terms of tissue distribution, mainly expressed in brain.

Its subcellular location is the cytoplasm. The catalysed reaction is L-seryl-[protein] + ATP = O-phospho-L-seryl-[protein] + ADP + H(+). The enzyme catalyses L-threonyl-[protein] + ATP = O-phospho-L-threonyl-[protein] + ADP + H(+). Functionally, may be involved in the control of neuronal proliferation or migration in the brain of embryos. The polypeptide is Serine/threonine-protein kinase SBK1 (sbk1) (Danio rerio (Zebrafish)).